Consider the following 343-residue polypeptide: Protein RecA (343 aa).

64–71 (GPESSGKT) contacts ATP.

The protein belongs to the RecA family.

The protein resides in the cytoplasm. Its function is as follows. Can catalyze the hydrolysis of ATP in the presence of single-stranded DNA, the ATP-dependent uptake of single-stranded DNA by duplex DNA, and the ATP-dependent hybridization of homologous single-stranded DNAs. It interacts with LexA causing its activation and leading to its autocatalytic cleavage. This Bacillus cereus (strain ATCC 10987 / NRS 248) protein is Protein RecA.